A 142-amino-acid chain; its full sequence is Transcriptional regulator MraZ (142 aa).

2 SpoVT-AbrB domains span residues 5–47 (EFQH…PQHE) and 76–119 (ATEC…SKEE).

Belongs to the MraZ family. As to quaternary structure, forms oligomers.

It is found in the cytoplasm. Its subcellular location is the nucleoid. The polypeptide is Transcriptional regulator MraZ (Desulforamulus reducens (strain ATCC BAA-1160 / DSM 100696 / MI-1) (Desulfotomaculum reducens)).